A 296-amino-acid chain; its full sequence is GTP cyclohydrolase FolE2 (296 aa).

The protein belongs to the GTP cyclohydrolase IV family.

It catalyses the reaction GTP + H2O = 7,8-dihydroneopterin 3'-triphosphate + formate + H(+). Its pathway is cofactor biosynthesis; 7,8-dihydroneopterin triphosphate biosynthesis; 7,8-dihydroneopterin triphosphate from GTP: step 1/1. Converts GTP to 7,8-dihydroneopterin triphosphate. The protein is GTP cyclohydrolase FolE2 of Delftia acidovorans (strain DSM 14801 / SPH-1).